The primary structure comprises 491 residues: UDP-N-acetylmuramate--L-alanine ligase (491 aa).

126–132 (GTHGKTT) is a binding site for ATP.

Belongs to the MurCDEF family.

It is found in the cytoplasm. The enzyme catalyses UDP-N-acetyl-alpha-D-muramate + L-alanine + ATP = UDP-N-acetyl-alpha-D-muramoyl-L-alanine + ADP + phosphate + H(+). Its pathway is cell wall biogenesis; peptidoglycan biosynthesis. In terms of biological role, cell wall formation. In Shigella dysenteriae serotype 1 (strain Sd197), this protein is UDP-N-acetylmuramate--L-alanine ligase.